A 1261-amino-acid chain; its full sequence is Pentatricopeptide repeat-containing protein 5, mitochondrial (1261 aa).

15 PPR repeats span residues 365–404 (HPDLLPALIRALGRAKRLNSCFQLLERYNLSDPTSDTSMT), 405–442 (NVRSWEGLMEAYFDTDHHVEASALMKSFFRKADSNQVI), 443–479 (PSSILDCFLRRLAQLGHYKESAEWLGMAIEKISTYKA), 480–514 (SPSTLSSILEAACLNNNDKFAIAFVRKYTLSRFSD), 550–584 (TNFTFSNVYKAFIENGKIDVALRLLRKHIDPKVSL), 806–849 (HPEV…EKAN), 852–886 (MALILDAMILSSSFARQFKSSNLFCDNMKMLGYIP), 887–924 (RASTFAHLINNSTRRGDTDDATTALNIFEETKRHNVKP), 925–959 (SVFLYNAVLSKLGRARRTTECWKLFQEMKESGLLP), 960–995 (TSVTYGTVINAACRIGDESLAEKLFAEMENQPNYQP), 996–1031 (RVAPYNTMIQFEVQTMFNREKALFYYNRLCATDIEP), 1032–1068 (SSHTYKLLMDAYGTLKPVNVGSVKAVLELMERTDVPI), 1109–1143 (DANLFQSQIESLIANDRIVEGIQIVSDMKRYNVSL), 1144–1179 (NAYIVNALIKGFTKVGMISKARYYFDLLECEGMSGK), and 1180–1214 (EPSTYENMVRAYLSVNDGRKAMEIVEQLKRKRYPL). The interval 1225-1261 (NSHMGQKPKRRSLNTSHSSLASLGNASTQHSINSSIN) is disordered. A compositionally biased stretch (polar residues) spans 1237–1261 (LNTSHSSLASLGNASTQHSINSSIN).

Its subcellular location is the mitochondrion. Mitochondrial RNA-binding protein that acts as a general negative regulator of mitochondrial translation. This is Pentatricopeptide repeat-containing protein 5, mitochondrial (ppr5) from Schizosaccharomyces pombe (strain 972 / ATCC 24843) (Fission yeast).